The following is a 199-amino-acid chain: MSCMPVSTKCNDIWVDFSCTGPSISELQKKEPKAWAAILRSHTNQQTAEDDNIIGSICDKQGLCSKDEYAYSQYCACVNSGTLWAECAFAPCNGNKNAYKTTEHRNILTNKQCPSGLTICQNIAEYGGSGNISDLYQNFNCNSVINTFLINVMNHPFLTLILIILILIIIYRLMPSSGGKHNDDKLPPPSLIFSNLNNF.

Residues 150 to 170 traverse the membrane as a helical segment; the sequence is INVMNHPFLTLILIILILIII.

It belongs to the asfivirus E199L family. Interacts with host PYCR2; this interaction results in autophagy activation. In terms of processing, contains intramolecular disulfide bonds.

It is found in the virion membrane. The protein localises to the host membrane. Its function is as follows. Essential for viral fusion with host endosomal membrane and core release. Not required for virus morphogenesis and egress. Induces complete autophagy through the interaction with and down-regulation of host PYCR2. The protein is Inner membrane protein E199L of Ornithodoros (relapsing fever ticks).